The following is a 313-amino-acid chain: UDP-glucose 4-epimerase (313 aa).

NAD(+) is bound by residues phenylalanine 11–isoleucine 12, aspartate 31–glycine 36, aspartate 56–isoleucine 57, and leucine 77–isoleucine 81. Substrate is bound by residues serine 121 and tyrosine 146. Tyrosine 146 and lysine 150 together coordinate NAD(+). Tyrosine 146 acts as the Proton acceptor in catalysis. Residues asparagine 175, valine 189–valine 190, lysine 204–phenylalanine 206, arginine 213, and arginine 271–aspartate 274 contribute to the substrate site.

Belongs to the NAD(P)-dependent epimerase/dehydratase family. In terms of assembly, homodimer. NAD(+) serves as cofactor.

It catalyses the reaction UDP-alpha-D-glucose = UDP-alpha-D-galactose. Its pathway is carbohydrate metabolism; galactose metabolism. Involved in the metabolism of galactose. Catalyzes the conversion of UDP-galactose (UDP-Gal) to UDP-glucose (UDP-Glc) through a mechanism involving the transient reduction of NAD. This Mycolicibacterium smegmatis (strain ATCC 700084 / mc(2)155) (Mycobacterium smegmatis) protein is UDP-glucose 4-epimerase.